We begin with the raw amino-acid sequence, 291 residues long: N-acetylmannosamine kinase (291 aa).

ATP contacts are provided by residues 5-12 and 132-139; these read AIDIGGTK and GVGGGVVC. Residues histidine 156, cysteine 166, cysteine 168, and cysteine 173 each coordinate Zn(2+).

It belongs to the ROK (NagC/XylR) family. NanK subfamily. Homodimer.

The enzyme catalyses an N-acyl-D-mannosamine + ATP = an N-acyl-D-mannosamine 6-phosphate + ADP + H(+). It functions in the pathway amino-sugar metabolism; N-acetylneuraminate degradation; D-fructose 6-phosphate from N-acetylneuraminate: step 2/5. In terms of biological role, catalyzes the phosphorylation of N-acetylmannosamine (ManNAc) to ManNAc-6-P. The protein is N-acetylmannosamine kinase of Salmonella paratyphi B (strain ATCC BAA-1250 / SPB7).